Consider the following 115-residue polypeptide: Yop proteins translocation protein M (115 aa).

Residues 19-38 form a disordered region; the sequence is HGGQAGRLTETNPLTENSHQ. Over residues 27 to 38 the composition is skewed to polar residues; the sequence is TETNPLTENSHQ.

Belongs to an operon involved in the translocation of Yop proteins across the bacterial membranes or in the specific control of this function. This Yersinia pestis protein is Yop proteins translocation protein M (yscM).